Consider the following 139-residue polypeptide: Peptide methionine sulfoxide reductase MsrB (139 aa).

One can recognise a MsrB domain in the interval D8–A130. 4 residues coordinate Zn(2+): C47, C50, C96, and C99. The active-site Nucleophile is the C119.

Belongs to the MsrB Met sulfoxide reductase family. Requires Zn(2+) as cofactor.

It carries out the reaction L-methionyl-[protein] + [thioredoxin]-disulfide + H2O = L-methionyl-(R)-S-oxide-[protein] + [thioredoxin]-dithiol. The sequence is that of Peptide methionine sulfoxide reductase MsrB from Hahella chejuensis (strain KCTC 2396).